The primary structure comprises 1906 residues: A disintegrin and metalloproteinase with thrombospondin motifs 20 (1906 aa).

The N-terminal stretch at 1-26 (MRVAKWLTGLLCPISLLLTGSWEVRF) is a signal peptide. A propeptide spanning residues 27–249 (HPRQEALVKT…RSQLHSRNKR (223 aa)) is cleaved from the precursor. Asn92 and Asn221 each carry an N-linked (GlcNAc...) asparagine glycan. A disordered region spans residues 201 to 222 (PCEVSENQMEKTALPSQSSRNT). One can recognise a Peptidase M12B domain in the interval 255–464 (RYVEVMVTAD…GHGECLLDKP (210 aa)). 11 cysteine pairs are disulfide-bonded: Cys330/Cys383, Cys359/Cys365, Cys377/Cys459, Cys415/Cys443, Cys486/Cys508, Cys497/Cys518, Cys503/Cys537, Cys531/Cys542, Cys565/Cys602, Cys569/Cys607, and Cys580/Cys592. His399 contacts Zn(2+). Glu400 is an active-site residue. Residues His403 and His409 each coordinate Zn(2+). The Disintegrin domain maps to 465–552 (NGRTYDLSPQ…VTRDMETRPV (88 aa)). The 56-residue stretch at 553–608 (DGEWGPWGPYSSCSRTCGGGIKSTARLCDRPEPRNGGRYCVGRRMKFRSCNTDSCP) folds into the TSP type-1 1 domain. N-linked (GlcNAc...) asparagine glycosylation is found at Asn714, Asn798, and Asn805. The interval 721-842 (AGVFNSAHYG…FNIPIEERSN (122 aa)) is spacer. 7 TSP type-1 domains span residues 843-901 (LFSW…MDCE), 906-962 (IIGK…GSCV), 962-1015 (VLTR…NCNE), 1017-1074 (PCPS…RACA), 1075-1131 (SWHV…APCL), 1148-1202 (RAAQ…LCFS), and 1203-1260 (PCGE…AACP). Residue Asn1057 is glycosylated (N-linked (GlcNAc...) asparagine). The segment at 1265–1295 (RAPSSSEQPSHVPSRNVPLTHKPGENQDQGA) is disordered. The span at 1266–1277 (APSSSEQPSHVP) shows a compositional bias: polar residues. 7 TSP type-1 domains span residues 1300–1351 (RGNQ…RHCG), 1354–1411 (PCPH…HACP), 1412–1465 (EDVS…KACR), 1468–1526 (RCPS…QDCM), 1527–1584 (RYQW…PHCK), 1585–1648 (YSVV…LRSC), and 1650–1706 (HVAT…NDCK). Residue Asn1562 is glycosylated (N-linked (GlcNAc...) asparagine). The GON domain maps to 1707-1906 (LLTTCKELQV…MATGLSIQVL (200 aa)). Residues Asn1719, Asn1759, and Asn1777 are each glycosylated (N-linked (GlcNAc...) asparagine).

Zn(2+) is required as a cofactor. Post-translationally, the precursor is cleaved by a furin endopeptidase. Glycosylated. Can be O-fucosylated by POFUT2 on a serine or a threonine residue found within the consensus sequence C1-X(2)-(S/T)-C2-G of the TSP type-1 repeat domains where C1 and C2 are the first and second cysteine residue of the repeat, respectively. Fucosylated repeats can then be further glycosylated by the addition of a beta-1,3-glucose residue by the glucosyltransferase, B3GALTL. Fucosylation mediates the efficient secretion of ADAMTS family members. Can also be C-glycosylated with one or two mannose molecules on tryptophan residues within the consensus sequence W-X-X-W of the TPRs, and N-glycosylated. These other glycosylations can also facilitate secretion. Expressed at low level in testis and brain.

Its subcellular location is the secreted. It localises to the extracellular space. The protein resides in the extracellular matrix. In terms of biological role, may play a role in tissue-remodeling process occurring in both normal and pathological conditions. May have a protease-independent function in the transport from the endoplasmic reticulum to the Golgi apparatus of secretory cargos, mediated by the GON domain. This chain is A disintegrin and metalloproteinase with thrombospondin motifs 20 (Adamts20), found in Mus musculus (Mouse).